Here is a 229-residue protein sequence, read N- to C-terminus: Peroxiredoxin 1 (229 aa).

In terms of domain architecture, Thioredoxin spans 33–192 (LGPKNKAPDF…AFRTLKAFQF (160 aa)). Cysteine 78 serves as the catalytic Cysteine sulfenic acid (-SOH) intermediate.

Belongs to the peroxiredoxin family. AhpC/Prx1 subfamily. As to quaternary structure, homodimer; disulfide-linked, upon oxidation.

It catalyses the reaction a hydroperoxide + [thioredoxin]-dithiol = an alcohol + [thioredoxin]-disulfide + H2O. Its function is as follows. Thiol-specific peroxidase that catalyzes the reduction of hydrogen peroxide and organic hydroperoxides to water and alcohols, respectively. Plays a role in cell protection against oxidative stress by detoxifying peroxides and as sensor of hydrogen peroxide-mediated signaling events. This Brugia malayi (Filarial nematode worm) protein is Peroxiredoxin 1 (TSA1).